Here is a 574-residue protein sequence, read N- to C-terminus: E3 ubiquitin-protein ligase NEURL1 (574 aa).

Positions 1-18 are enriched in polar residues; the sequence is MGNNFSSVSSLQRGNPSR. The interval 1-53 is disordered; sequence MGNNFSSVSSLQRGNPSRASRGHPQNLKDSIGGSFPVPSHRCHHKQKHCPPTL. A lipid anchor (N-myristoyl glycine) is attached at Gly-2. NHR domains lie at 61 to 217 and 292 to 447; these read TPLL…QLLD and GDLR…RILG. The RING-type zinc finger occupies 520 to 560; sequence ECTICYEHAVDTVIYTCGHMCLCYSCGLRLKKALHACCPIC.

As to quaternary structure, interacts with CPEB3 (via N-terminal domain); the interaction increases CPEB3 ubiquitination. Interacts with DLL1. In terms of processing, myristoylation is a determinant of membrane targeting. In terms of tissue distribution, expressed in CA1 pyramidal neurons (at protein level). Expressed throughout the adult forebrain, including the cerebral cortex, amygdala, striatum, and CA1 area of the hippocampus. Expressed in sensory neurons of the olfactory epithelium, the vomeronasal organ, mammary gland and skeletal muscle.

It is found in the cytoplasm. The protein resides in the perinuclear region. The protein localises to the cell membrane. Its subcellular location is the perikaryon. It localises to the cell projection. It is found in the dendrite. The protein resides in the postsynaptic density. The catalysed reaction is S-ubiquitinyl-[E2 ubiquitin-conjugating enzyme]-L-cysteine + [acceptor protein]-L-lysine = [E2 ubiquitin-conjugating enzyme]-L-cysteine + N(6)-ubiquitinyl-[acceptor protein]-L-lysine.. It participates in protein modification; protein ubiquitination. Plays a role in hippocampal-dependent synaptic plasticity, learning and memory. Involved in the formation of spines and functional synaptic contacts by modulating the translational activity of the cytoplasmic polyadenylation element-binding protein CPEB3. Promotes ubiquitination of CPEB3, and hence induces CPEB3-dependent mRNA translation activation of glutamate receptor GRIA1 and GRIA2. Can function as an E3 ubiquitin-protein ligase to activate monoubiquitination of JAG1 (in vitro), thereby regulating the Notch pathway. Acts as a tumor suppressor; inhibits malignant cell transformation of medulloblastoma (MB) cells by inhibiting the Notch signaling pathway. The sequence is that of E3 ubiquitin-protein ligase NEURL1 (Neurl1) from Mus musculus (Mouse).